Consider the following 88-residue polypeptide: Small ribosomal subunit protein bS20 (88 aa).

The disordered stretch occupies residues 1 to 25 (MANSPQAKKRARQNERRAEVNKARR). Positions 12–22 (RQNERRAEVNK) are enriched in basic and acidic residues.

This sequence belongs to the bacterial ribosomal protein bS20 family.

In terms of biological role, binds directly to 16S ribosomal RNA. The polypeptide is Small ribosomal subunit protein bS20 (Dinoroseobacter shibae (strain DSM 16493 / NCIMB 14021 / DFL 12)).